We begin with the raw amino-acid sequence, 462 residues long: NEDD8-activating enzyme E1 catalytic subunit (462 aa).

Residue alanine 2 is modified to N-acetylalanine. The interaction with UBE2M N-terminus stretch occupies residues 53–70 (HPDFEPSTESLQFLLDTC). Residues 100–124 (DMDT…GRPK) and 148–171 (IQDF…SIIA) each bind ATP. 2 interaction with UBE2M N-terminus regions span residues 157–161 (RQFHI) and 192–217 (PSSI…LPGM). An interaction with NEDD8 region spans residues 227 to 229 (LYP). Cysteine 237 serves as the catalytic Glycyl thioester intermediate. 2 interaction with NAE1 regions span residues 242 to 248 (MPRLPEH) and 292 to 295 (YNIR). An interaction with UBE2M N-terminus region spans residues 331–338 (IATSAYIP). The tract at residues 352–357 (YTYTFE) is interaction with NEDD8. The tract at residues 368–462 (SQLPQNIQFS…QTVLFKLHFT (95 aa)) is interaction with UBE2M core domain.

Belongs to the ubiquitin-activating E1 family. UBA3 subfamily. In terms of assembly, heterodimer of UBA3 and NAE1. Interacts with NEDD8, UBE2F and UBE2M. Binds ESR1 and ESR2 with bound steroid ligand. Interacts with TBATA. In terms of tissue distribution, ubiquitously expressed.

The enzyme catalyses ATP + [NEDD8 protein] + [E1 NEDD8-activating enzyme]-L-cysteine = AMP + diphosphate + [E1 NEDD8-activating enzyme]-S-[NEDD8 protein]-yl-L-cysteine.. The protein operates within protein modification; protein neddylation. With respect to regulation, binding of TP53BP2 to the regulatory subunit NAE1 decreases activity. Functionally, catalytic subunit of the dimeric UBA3-NAE1 E1 enzyme. E1 activates NEDD8 by first adenylating its C-terminal glycine residue with ATP, thereafter linking this residue to the side chain of the catalytic cysteine, yielding a NEDD8-UBA3 thioester and free AMP. E1 finally transfers NEDD8 to the catalytic cysteine of UBE2M. Down-regulates steroid receptor activity. Necessary for cell cycle progression. In Rattus norvegicus (Rat), this protein is NEDD8-activating enzyme E1 catalytic subunit (Uba3).